The following is a 116-amino-acid chain: MSAVAEAPLPIQMTDAAANKVKNLITEEENPELKLRVYITGGGCSGFQYGFTFDEKINEGDTVVEKSGVTMVIDPMSLQYLVGGSVDYTEGLEGSRFTVTNPNASTTCGCGSSFSI.

Residues Cys-44, Cys-108, and Cys-110 each coordinate iron-sulfur cluster.

It belongs to the HesB/IscA family. In terms of assembly, homodimer. The cofactor is iron-sulfur cluster.

Functionally, required for insertion of 4Fe-4S clusters for at least IspG. This chain is Iron-sulfur cluster insertion protein ErpA, found in Aeromonas salmonicida (strain A449).